An 828-amino-acid chain; its full sequence is Periplasmic nitrate reductase (828 aa).

Positions 1 to 31 (MKLSRRSFMKANAVAAAAAAAGLSVPGVARA) form a signal peptide, tat-type signal. The 57-residue stretch at 39-95 (IKWDKAPCRFCGTGCGVLVGTQQGRVVACQGDPDAPVNRGLNCIKGYFLPKIMYGKD) folds into the 4Fe-4S Mo/W bis-MGD-type domain. Residues Cys-46, Cys-49, Cys-53, and Cys-81 each coordinate [4Fe-4S] cluster. Mo-bis(molybdopterin guanine dinucleotide) is bound by residues Lys-83, Gln-150, Asn-175, Cys-179, 212-219 (WGSNMAEM), 243-247 (STYQH), 262-264 (QSD), Met-372, Gln-376, Asn-482, 508-509 (SD), Lys-531, Asp-558, and 718-727 (TGRVLEHWHT). Phe-794 lines the substrate pocket. Asn-802 and Lys-819 together coordinate Mo-bis(molybdopterin guanine dinucleotide).

This sequence belongs to the prokaryotic molybdopterin-containing oxidoreductase family. NasA/NapA/NarB subfamily. As to quaternary structure, component of the periplasmic nitrate reductase NapAB complex composed of NapA and NapB. The cofactor is [4Fe-4S] cluster. Requires Mo-bis(molybdopterin guanine dinucleotide) as cofactor. In terms of processing, predicted to be exported by the Tat system. The position of the signal peptide cleavage has not been experimentally proven.

The protein localises to the periplasm. It carries out the reaction 2 Fe(II)-[cytochrome] + nitrate + 2 H(+) = 2 Fe(III)-[cytochrome] + nitrite + H2O. In terms of biological role, catalytic subunit of the periplasmic nitrate reductase complex NapAB. Receives electrons from NapB and catalyzes the reduction of nitrate to nitrite. The sequence is that of Periplasmic nitrate reductase from Escherichia coli O127:H6 (strain E2348/69 / EPEC).